Consider the following 366-residue polypeptide: RNA 3'-terminal phosphate cyclase (366 aa).

The ATP site is built by Gln104, Pro131, Tyr294, Asp297, Gln298, and His320. His320 serves as the catalytic Tele-AMP-histidine intermediate.

This sequence belongs to the RNA 3'-terminal cyclase family. Type 1 subfamily.

Its subcellular location is the nucleus. It localises to the nucleoplasm. The catalysed reaction is a 3'-end 3'-phospho-ribonucleotide-RNA + ATP = a 3'-end 2',3'-cyclophospho-ribonucleotide-RNA + AMP + diphosphate. Functionally, catalyzes the conversion of 3'-phosphate to a 2',3'-cyclic phosphodiester at the end of RNA. The mechanism of action of the enzyme occurs in 3 steps: (A) adenylation of the enzyme by ATP; (B) transfer of adenylate to an RNA-N3'P to produce RNA-N3'PP5'A; (C) and attack of the adjacent 2'-hydroxyl on the 3'-phosphorus in the diester linkage to produce the cyclic end product. Likely functions in some aspects of cellular RNA processing. Function plays an important role in regulating axon regeneration by inhibiting central nervous system (CNS) axon regeneration following optic nerve injury. This is RNA 3'-terminal phosphate cyclase (RTCA) from Bos taurus (Bovine).